Reading from the N-terminus, the 688-residue chain is Glycine--tRNA ligase beta subunit (688 aa).

The protein belongs to the class-II aminoacyl-tRNA synthetase family. In terms of assembly, tetramer of two alpha and two beta subunits.

It is found in the cytoplasm. It catalyses the reaction tRNA(Gly) + glycine + ATP = glycyl-tRNA(Gly) + AMP + diphosphate. The polypeptide is Glycine--tRNA ligase beta subunit (Haemophilus influenzae (strain PittEE)).